Consider the following 360-residue polypeptide: Ribosomal RNA small subunit methyltransferase C (360 aa).

The protein belongs to the methyltransferase superfamily. RsmC family. As to quaternary structure, monomer.

It localises to the cytoplasm. It catalyses the reaction guanosine(1207) in 16S rRNA + S-adenosyl-L-methionine = N(2)-methylguanosine(1207) in 16S rRNA + S-adenosyl-L-homocysteine + H(+). Specifically methylates the guanine in position 1207 of 16S rRNA in the 30S particle. This is Ribosomal RNA small subunit methyltransferase C from Alteromonas mediterranea (strain DSM 17117 / CIP 110805 / LMG 28347 / Deep ecotype).